A 225-amino-acid polypeptide reads, in one-letter code: NAD(P)H-quinone oxidoreductase subunit K, chloroplastic (225 aa).

[4Fe-4S] cluster contacts are provided by Cys43, Cys44, Cys108, and Cys139.

This sequence belongs to the complex I 20 kDa subunit family. In terms of assembly, NDH is composed of at least 16 different subunits, 5 of which are encoded in the nucleus. [4Fe-4S] cluster serves as cofactor.

It localises to the plastid. It is found in the chloroplast thylakoid membrane. It carries out the reaction a plastoquinone + NADH + (n+1) H(+)(in) = a plastoquinol + NAD(+) + n H(+)(out). It catalyses the reaction a plastoquinone + NADPH + (n+1) H(+)(in) = a plastoquinol + NADP(+) + n H(+)(out). Its function is as follows. NDH shuttles electrons from NAD(P)H:plastoquinone, via FMN and iron-sulfur (Fe-S) centers, to quinones in the photosynthetic chain and possibly in a chloroplast respiratory chain. The immediate electron acceptor for the enzyme in this species is believed to be plastoquinone. Couples the redox reaction to proton translocation, and thus conserves the redox energy in a proton gradient. The sequence is that of NAD(P)H-quinone oxidoreductase subunit K, chloroplastic from Daucus carota (Wild carrot).